The sequence spans 118 residues: MARIAGINIPDHKHAVIALTAIYGVGRTRSKAICAAAGIAENVKIKDLDEAQIESLREQVGKFTVEGDLRRQISMNIKRLMDLGCYRGLRHRRSLPVRGQRTKTNARTRKGPRKAIKK.

The tract at residues 94 to 118 (SLPVRGQRTKTNARTRKGPRKAIKK) is disordered.

It belongs to the universal ribosomal protein uS13 family. Part of the 30S ribosomal subunit. Forms a loose heterodimer with protein S19. Forms two bridges to the 50S subunit in the 70S ribosome.

Its function is as follows. Located at the top of the head of the 30S subunit, it contacts several helices of the 16S rRNA. In the 70S ribosome it contacts the 23S rRNA (bridge B1a) and protein L5 of the 50S subunit (bridge B1b), connecting the 2 subunits; these bridges are implicated in subunit movement. Contacts the tRNAs in the A and P-sites. This Aeromonas hydrophila subsp. hydrophila (strain ATCC 7966 / DSM 30187 / BCRC 13018 / CCUG 14551 / JCM 1027 / KCTC 2358 / NCIMB 9240 / NCTC 8049) protein is Small ribosomal subunit protein uS13.